Consider the following 81-residue polypeptide: uncharacterized protein (81 aa).

A SpoVT-AbrB domain is found at 1-45 (MRTTIDVAGRLVIPKRIRERLGLRGNDQVEITERDGRIEIEPAPT).

This sequence to B.subtilis SpoVT.

This is an uncharacterized protein from Mycobacterium bovis (strain ATCC BAA-935 / AF2122/97).